The chain runs to 148 residues: Small ribosomal subunit protein bS6 (148 aa).

Residues 96–148 (HEEGQSAMLTRRDDRRERDGDDRPRRREGGFDRGDRGDRGPRRPRDTEAGEGA) are disordered.

The protein belongs to the bacterial ribosomal protein bS6 family.

In terms of biological role, binds together with bS18 to 16S ribosomal RNA. The polypeptide is Small ribosomal subunit protein bS6 (Brucella canis (strain ATCC 23365 / NCTC 10854 / RM-666)).